Consider the following 245-residue polypeptide: Inner membrane protein YgaZ (245 aa).

At 1–24 (MESPTPQPAPGSATFMEGCKDSLP) the chain is on the cytoplasmic side. A helical transmembrane segment spans residues 25–45 (IVISYIPVAFAFGLNATRLGF). Topologically, residues 46 to 63 (SPLESVFFSCIIYAGASQ) are periplasmic. Residues 64–84 (FVITAMLAAGSSLWIAALTVM) form a helical membrane-spanning segment. At 85–109 (AMDVRHVLYGPSLRSRIIQRLQKSK) the chain is on the cytoplasmic side. Residues 110 to 130 (TALWAFGLTDEVFAAATAKLV) form a helical membrane-spanning segment. Over 131–140 (RNNRRWSENW) the chain is Periplasmic. A helical transmembrane segment spans residues 141–161 (MIGIAFSSWSSWVFGTVIGAF). At 162–172 (SGSGLLQGYPA) the chain is on the cytoplasmic side. A helical transmembrane segment spans residues 173–193 (VEAALGFMLPALFMSFLLASF). The Periplasmic portion of the chain corresponds to 194–205 (QRKQSLCVTAAL). Residues 206–226 (VGALAGVTLFSIPVAILAGIV) traverse the membrane as a helical segment. The Cytoplasmic portion of the chain corresponds to 227-245 (CGCLTALIQAFWQGAPDEL).

Belongs to the AzlC family.

Its subcellular location is the cell inner membrane. This chain is Inner membrane protein YgaZ (ygaZ), found in Escherichia coli (strain K12).